Consider the following 117-residue polypeptide: NADPH-dependent 7-cyano-7-deazaguanine reductase (117 aa).

Cysteine 31 (thioimide intermediate) is an active-site residue. The Proton donor role is filled by aspartate 38. Substrate contacts are provided by residues 53-55 and 72-73; these read IEL and YE.

The protein belongs to the GTP cyclohydrolase I family. QueF type 1 subfamily.

Its subcellular location is the cytoplasm. It catalyses the reaction 7-aminomethyl-7-carbaguanine + 2 NADP(+) = 7-cyano-7-deazaguanine + 2 NADPH + 3 H(+). It functions in the pathway tRNA modification; tRNA-queuosine biosynthesis. Its function is as follows. Catalyzes the NADPH-dependent reduction of 7-cyano-7-deazaguanine (preQ0) to 7-aminomethyl-7-deazaguanine (preQ1). This chain is NADPH-dependent 7-cyano-7-deazaguanine reductase, found in Chlorobaculum tepidum (strain ATCC 49652 / DSM 12025 / NBRC 103806 / TLS) (Chlorobium tepidum).